Consider the following 90-residue polypeptide: Leech factor Xa inhibitor (90 aa).

It localises to the secreted. In terms of biological role, potent anticoagulant inhibiting the amidolytic activity of factor Xa (F10) (Ki=4nM) and reducing its ability to activate prothrombin (F2) in the prothrombinase complex (EC(50)=40nM). This is Leech factor Xa inhibitor from Haementeria depressa (Leech).